Here is a 528-residue protein sequence, read N- to C-terminus: MASELLANPTNGSGITRPDPQRTYQVVVAATQNMGIGKDGKLPWRLPSDMKFFKDVTMTTSDPLKRNAVIMGRKTWESIPIQHRPLPGRLNVVLTRSGSFDIATVENVVICGSMISALELLAGSPYCVSVEKVFVIGGGQIYREALNAPGCDAVHITEIEEHIECDTFIPLLDESVFQPWYSSFPLVENKIRYCFTTYVRVRNSVAELTSQTNGCSSDSKSDSGNFEIQNFSFLPKTVFEKHEEYLYLGLVENIISNGVTKNDRTRTGTVSIFGCQMRFNLRKSFPLLTTKKVFWRGVVEELLWFISGSTNAKILKEKGVNIWEGNGSREYLDSIGLTDREEGDLGPIYGFQWRHFGARYTDMHADYSGQGFDQLLDVISKIKNNPDDRRIIQSAWNPSDLRLMALPPCHMFAQFYVANGELSCQMYQRSADMGLGVPFNIAAYALLTCMIAHVCDLVPGDFVHSIGDAHVYSNHLSDLFETSFRMLPKTFPVLKINSGEKDIDSFEAADFKLIGYDPHQKIEMKMAV.

Positions 1–20 are disordered; sequence MASELLANPTNGSGITRPDP. Residues 23–200 form the DHFR domain; the sequence is TYQVVVAATQ…IRYCFTTYVR (178 aa). V27 provides a ligand contact to substrate. NADP(+) is bound by residues A29 and 35-41; that span reads GIGKDGK. D49 serves as a coordination point for substrate. Residues 73–75 and 94–97 each bind NADP(+); these read RKT and LTRS. The substrate site is built by I136, Y142, and T157. 137–144 is an NADP(+) binding site; sequence GGGQIYRE. A thymidylate synthase region spans residues 202-528; the sequence is RNSVAELTSQ…HQKIEMKMAV (327 aa). R264 provides a ligand contact to dUMP. C409 is a catalytic residue. DUMP contacts are provided by residues H410, 428-432, N440, and 470-472; these read QRSAD and HVY.

The protein in the N-terminal section; belongs to the dihydrofolate reductase family. In the C-terminal section; belongs to the thymidylate synthase family.

It carries out the reaction (6S)-5,6,7,8-tetrahydrofolate + NADP(+) = 7,8-dihydrofolate + NADPH + H(+). The enzyme catalyses dUMP + (6R)-5,10-methylene-5,6,7,8-tetrahydrofolate = 7,8-dihydrofolate + dTMP. It functions in the pathway cofactor biosynthesis; tetrahydrofolate biosynthesis; 5,6,7,8-tetrahydrofolate from 7,8-dihydrofolate: step 1/1. Bifunctional enzyme. Involved in de novo dTMP biosynthesis. Key enzyme in folate metabolism. Can play two different roles depending on the source of dihydrofolate: de novo synthesis of tetrahydrofolate or recycling of the dihydrofolate released as one of the end products of the TS catalyzed reaction. Catalyzes an essential reaction for de novo glycine and purine synthesis, DNA precursor synthesis, and for the conversion of dUMP to dTMP. In Daucus carota (Wild carrot), this protein is Bifunctional dihydrofolate reductase-thymidylate synthase.